The primary structure comprises 312 residues: MEIAVFGGGAWGRALAFAFGEKNEVKIISRRDLNEPLKKLNDALISKGSAPIEQVDLQRGLKAVLYVIAISVQHLREWFQNASLPKNAKVLIASKGIEVLNRAFVSEIAKDFIDPNSLCFLAGPSFAAEIIQGLPCALVIHSNNQALALEFANKTPSFIRAYAQQDIIGGEIAGAYKNVIAIAGGVCDGLKLGNSAKASLLSRGLVEMQRFGAFFGGKTETFLGLSGAGDLFLTANSILSRNYRVGLGLAQNKPLEVVLEELGEVAEGVKTTNAIVEIARKYGIYTPIASELALLLKGKSVLESMNDLIRRA.

Residues W11, R30, R31, and K95 each contribute to the NADPH site. Sn-glycerol 3-phosphate is bound by residues K95, G123, and S125. A127 is a binding site for NADPH. Positions 177, 230, 240, 241, and 242 each coordinate sn-glycerol 3-phosphate. Residue K177 is the Proton acceptor of the active site. Residue R241 participates in NADPH binding. Positions 265 and 267 each coordinate NADPH.

This sequence belongs to the NAD-dependent glycerol-3-phosphate dehydrogenase family.

The protein resides in the cytoplasm. It catalyses the reaction sn-glycerol 3-phosphate + NAD(+) = dihydroxyacetone phosphate + NADH + H(+). It carries out the reaction sn-glycerol 3-phosphate + NADP(+) = dihydroxyacetone phosphate + NADPH + H(+). It participates in membrane lipid metabolism; glycerophospholipid metabolism. Its function is as follows. Catalyzes the reduction of the glycolytic intermediate dihydroxyacetone phosphate (DHAP) to sn-glycerol 3-phosphate (G3P), the key precursor for phospholipid synthesis. This chain is Glycerol-3-phosphate dehydrogenase [NAD(P)+], found in Helicobacter pylori (strain Shi470).